We begin with the raw amino-acid sequence, 159 residues long: Ribosomal RNA large subunit methyltransferase H (159 aa).

S-adenosyl-L-methionine is bound by residues Leu76, Gly108, and 127 to 132 (FGRLTL).

It belongs to the RNA methyltransferase RlmH family. In terms of assembly, homodimer.

The protein resides in the cytoplasm. It catalyses the reaction pseudouridine(1915) in 23S rRNA + S-adenosyl-L-methionine = N(3)-methylpseudouridine(1915) in 23S rRNA + S-adenosyl-L-homocysteine + H(+). Specifically methylates the pseudouridine at position 1915 (m3Psi1915) in 23S rRNA. The chain is Ribosomal RNA large subunit methyltransferase H from Streptococcus pneumoniae (strain 70585).